Consider the following 274-residue polypeptide: NADPH-dependent 7-cyano-7-deazaguanine reductase (274 aa).

80 to 82 (VES) lines the substrate pocket. 82–83 (SK) contacts NADPH. C181 serves as the catalytic Thioimide intermediate. D188 acts as the Proton donor in catalysis. Position 220–221 (220–221 (HE)) interacts with substrate. Residue 249-250 (RG) coordinates NADPH.

It belongs to the GTP cyclohydrolase I family. QueF type 2 subfamily. In terms of assembly, homodimer.

It localises to the cytoplasm. It catalyses the reaction 7-aminomethyl-7-carbaguanine + 2 NADP(+) = 7-cyano-7-deazaguanine + 2 NADPH + 3 H(+). It participates in tRNA modification; tRNA-queuosine biosynthesis. Its function is as follows. Catalyzes the NADPH-dependent reduction of 7-cyano-7-deazaguanine (preQ0) to 7-aminomethyl-7-deazaguanine (preQ1). This chain is NADPH-dependent 7-cyano-7-deazaguanine reductase, found in Burkholderia ambifaria (strain MC40-6).